The sequence spans 773 residues: Polyribonucleotide nucleotidyltransferase (773 aa).

Mg(2+)-binding residues include aspartate 490 and aspartate 496. Positions 557 to 616 (PKIDTITIPVDKIKVVIGKGGEQIDKIIAETGVKIDIDDEGLCSIFSSDQAAIDRAKEII) constitute a KH domain. Residues 626–694 (GEIYDAKVVR…DKGRVDASMR (69 aa)) enclose the S1 motif domain. Residues 700-721 (PEGYVEPERKPRERRENGDRRK) show a composition bias toward basic and acidic residues. A disordered region spans residues 700 to 773 (PEGYVEPERK…FPELSTKKPE (74 aa)). Over residues 739 to 748 (RNNQGNKVGN) the composition is skewed to low complexity. Basic and acidic residues predominate over residues 751 to 773 (FELRERKSHIDEEFPELSTKKPE).

The protein belongs to the polyribonucleotide nucleotidyltransferase family. The cofactor is Mg(2+).

It localises to the cytoplasm. It carries out the reaction RNA(n+1) + phosphate = RNA(n) + a ribonucleoside 5'-diphosphate. In terms of biological role, involved in mRNA degradation. Catalyzes the phosphorolysis of single-stranded polyribonucleotides processively in the 3'- to 5'-direction. In Lactococcus lactis subsp. lactis (strain IL1403) (Streptococcus lactis), this protein is Polyribonucleotide nucleotidyltransferase.